The following is a 683-amino-acid chain: Putative boron transporter 5 (683 aa).

Residues 1–38 (MEEERVEGSKRPFQGIIRDVKGRALCYKQDWIAGLRSG) lie on the Cytoplasmic side of the membrane. A helical transmembrane segment spans residues 39–59 (FGILAPTTYVFFASALPVIAF). Residues 60–80 (GEQLSHDTERSLSTVETLAST) lie on the Extracellular side of the membrane. The chain crosses the membrane as a helical span at residues 81–101 (ALCGVIHSLLGGQPLLILGVA). Over 102–126 (EPTVLMYKYLYDFAKGRPELGKQLY) the chain is Cytoplasmic. The helical transmembrane segment at 127 to 147 (LAWVAWVCVWTALLLFLMAIF) threads the bilayer. Topologically, residues 148 to 158 (NMAYIINRFTR) are extracellular. Residues 159 to 179 (IAGELFGMLIAVLFLQQTIKG) form a helical membrane-spanning segment. Residues 180–200 (MVSEFRIPKGEDSKLEKYQFE) lie on the Cytoplasmic side of the membrane. The chain crosses the membrane as a helical span at residues 201 to 221 (WLYTNGLLGLIFTVGLVYTAL). Residues 222–238 (KSRKARSWPYGTGCCRS) lie on the Extracellular side of the membrane. A helical transmembrane segment spans residues 239–259 (FVADYGVPLMVVVWTALSFST). Residues 260–294 (PSKLPSGVPRRLVSPLPWDSVSLTHWTVIKDMGKV) lie on the Cytoplasmic side of the membrane. A helical membrane pass occupies residues 295–315 (SPGYIFAAFIPALMIAGLYFF). Residues 316 to 335 (DHSVVSQLAQQKEFNLKNPS) are Extracellular-facing. Residues 336–356 (AYHYDILLLGFMVLICGMLGL) traverse the membrane as a helical segment. Residues 357–477 (PPSNGVLPQS…EQRVSNLLQS (121 aa)) are Cytoplasmic-facing. The helical transmembrane segment at 478 to 498 (LLVIGAVFALPVIKLIPTSLL) threads the bilayer. The Extracellular portion of the chain corresponds to 499–565 (WGYFAYMAID…QILYFGLCYG (67 aa)). The chain crosses the membrane as a helical span at residues 566–586 (VTWIPVAGIMFPVLFFLLVAI). Over 587–683 (RQYLLPKLFK…GDGDMSSSRE (97 aa)) the chain is Cytoplasmic.

The protein belongs to the anion exchanger (TC 2.A.31.3) family.

Its subcellular location is the membrane. In terms of biological role, putative boron transporter. Boron is essential for maintaining the integrity of plants cell walls. This is Putative boron transporter 5 (BOR5) from Arabidopsis thaliana (Mouse-ear cress).